The following is a 1055-amino-acid chain: DIS3-like exonuclease 2 (1055 aa).

Disordered regions lie at residues 1–109 (MKSA…SSPE) and 229–249 (SAAKPEGTNSPPEKDDKKARQ). Residues 17–32 (HKKKRNRPQKQNRRSK) show a composition bias toward basic residues. Positions 39–59 (EDAHVEESLDGRDSSRSKAKD) are enriched in basic and acidic residues. Over residues 97–108 (PRRSASPLLSSP) the composition is skewed to low complexity. Mg(2+)-binding residues include D488 and D497.

The protein belongs to the RNR ribonuclease family. DIS3L2 subfamily. It depends on Mg(2+) as a cofactor. Requires Mn(2+) as cofactor. Widely expressed.

It localises to the cytoplasm. The protein localises to the P-body. 3'-5'-exoribonuclease that specifically recognizes RNAs polyuridylated at their 3' end and mediates their degradation. Component of an exosome-independent RNA degradation pathway that mediates degradation of cytoplasmic mRNAs that have been deadenylated and subsequently uridylated at their 3'. The sequence is that of DIS3-like exonuclease 2 (SOV) from Arabidopsis thaliana (Mouse-ear cress).